We begin with the raw amino-acid sequence, 224 residues long: UPF0758 protein Neut_0782 (224 aa).

The MPN domain maps to 102-224; sequence IMDSPQSVRS…TVSFAERGLI (123 aa). 3 residues coordinate Zn(2+): histidine 173, histidine 175, and aspartate 186. The JAMM motif signature appears at 173 to 186; sequence HNHPSGVAEPSRAD.

Belongs to the UPF0758 family.

The sequence is that of UPF0758 protein Neut_0782 from Nitrosomonas eutropha (strain DSM 101675 / C91 / Nm57).